The following is a 250-amino-acid chain: NAD(P)H-quinone oxidoreductase subunit K, chloroplastic (250 aa).

[4Fe-4S] cluster is bound by residues C61, C62, C126, and C157.

Belongs to the complex I 20 kDa subunit family. NDH is composed of at least 16 different subunits, 5 of which are encoded in the nucleus. Requires [4Fe-4S] cluster as cofactor.

The protein resides in the plastid. It localises to the chloroplast thylakoid membrane. It carries out the reaction a plastoquinone + NADH + (n+1) H(+)(in) = a plastoquinol + NAD(+) + n H(+)(out). It catalyses the reaction a plastoquinone + NADPH + (n+1) H(+)(in) = a plastoquinol + NADP(+) + n H(+)(out). In terms of biological role, NDH shuttles electrons from NAD(P)H:plastoquinone, via FMN and iron-sulfur (Fe-S) centers, to quinones in the photosynthetic chain and possibly in a chloroplast respiratory chain. The immediate electron acceptor for the enzyme in this species is believed to be plastoquinone. Couples the redox reaction to proton translocation, and thus conserves the redox energy in a proton gradient. The sequence is that of NAD(P)H-quinone oxidoreductase subunit K, chloroplastic from Angiopteris evecta (Mule's foot fern).